A 277-amino-acid chain; its full sequence is Nickel transport system permease protein NikC (277 aa).

At 1–12 (MNFFLSSRWSVR) the chain is on the cytoplasmic side. The chain crosses the membrane as a helical span at residues 13–33 (LALIIIALLALIALTSQWWLP). Over 34-78 (YDPQAIDLPSRLLSPDAQHWLGTDHLGRDIFSRLMAATRVSLGSV) the chain is Periplasmic. The region spanning 67 to 260 (LMAATRVSLG…ISVMAFNLVG (194 aa)) is the ABC transmembrane type-1 domain. Residues 79–99 (MACLLLVLTLGLVIGGSAGLI) form a helical membrane-spanning segment. The Cytoplasmic portion of the chain corresponds to 100–120 (GGRVDQATMRVADMFMTFPTS). A helical membrane pass occupies residues 121-141 (ILSFFMVGVLGTGLTNVIIAI). Residues 142–183 (ALSHWAWYARMVRSLVISLRQREFVLASRLSGAGHVRVFVDH) are Periplasmic-facing. The helical transmembrane segment at 184 to 204 (LAGAVIPSLLVLATLDIGHMM) threads the bilayer. Residues 205–207 (LHV) lie on the Cytoplasmic side of the membrane. The chain crosses the membrane as a helical span at residues 208–228 (AGMSFLGLGVTAPTAEWGVMI). Residues 229–239 (NDARQYIWTQP) are Periplasmic-facing. The helical transmembrane segment at 240–260 (LQMFWPGLALFISVMAFNLVG) threads the bilayer. Residues 261-277 (DALRDHLDPHLVTEHAH) are Cytoplasmic-facing.

The protein belongs to the binding-protein-dependent transport system permease family. OppBC subfamily. As to quaternary structure, probably forms a heterodimeric pore with NikB.

The protein resides in the cell inner membrane. Its function is as follows. Involved in a nickel transport system, probably translocates nickel through the bacterial inner membrane. The protein is Nickel transport system permease protein NikC (nikC) of Escherichia coli O157:H7.